A 139-amino-acid chain; its full sequence is Putative pre-16S rRNA nuclease (139 aa).

It belongs to the YqgF nuclease family.

The protein localises to the cytoplasm. Functionally, could be a nuclease involved in processing of the 5'-end of pre-16S rRNA. This chain is Putative pre-16S rRNA nuclease, found in Caldanaerobacter subterraneus subsp. tengcongensis (strain DSM 15242 / JCM 11007 / NBRC 100824 / MB4) (Thermoanaerobacter tengcongensis).